We begin with the raw amino-acid sequence, 452 residues long: Probable ECA polymerase (452 aa).

11 consecutive transmembrane segments (helical) span residues 6-26 (FSGLLVVWLLSTLFIATLTWF), 37-57 (VFFSLLFLLTFFFGFPLTSVL), 63-83 (VGVAPPEILLQALLSAACFYG), 118-138 (VILMGIALVSVAIFFMHNGFL), 155-175 (GVALKRFFYFFIPAMLVVYFL), 181-201 (AWLFFLVSTVAFGLLTYMIVG), 207-227 (IIIAFAIFLFIGIIRGWISLW), 228-248 (MLAAAGVLGIVGMFWLALKRY), 341-361 (LVVMGGALFIPLGAIVVGLII), 378-398 (YKAAILHSFCFGAIFNMIVLA), and 410-430 (VFFLVVFGASLLVAKLLFWLF).

It belongs to the WzyE family. Probably part of a complex composed of WzxE, WzyE and WzzE.

It localises to the cell inner membrane. It functions in the pathway bacterial outer membrane biogenesis; enterobacterial common antigen biosynthesis. Its function is as follows. Probably involved in the polymerization of enterobacterial common antigen (ECA) trisaccharide repeat units. The protein is Probable ECA polymerase of Salmonella choleraesuis (strain SC-B67).